A 213-amino-acid polypeptide reads, in one-letter code: Ras-related protein Rab-39B (213 aa).

Positions 17, 20, 21, 22, 23, 37, and 40 each coordinate GTP. Mg(2+) is bound at residue S22. The segment at 35–43 is switch-I; sequence QVSDPTVGV. The Mg(2+) site is built by T40 and D64. GTP-binding residues include G67, H123, K124, D126, A154, and R155. The tract at residues 67–83 is switch-II; the sequence is GQERFRSITRAYYRNSV. A Phosphoserine modification is found at S201. 2 S-geranylgeranyl cysteine lipidation sites follow: C211 and C213. C213 is subject to Cysteine methyl ester.

The protein belongs to the small GTPase superfamily. Rab family. In terms of assembly, interacts (GDP-bound) with C9orf72; C9orf72 in complex with SMCR8 acts as a GEF for RAB39B. Interacts (in GTP-bound form) with PICK1 (via PDZ domain); a PICK1 homodimer may allow simultaneous association of RAB39B and GRIA2 to PICK1 which is involved in GRIA2 trafficking. Interacts with isoform c of RASSF1; the interaction is strong. Interacts with isoform a of RASSF1; the interaction is weak. Interacts with the DLG4/PSD-95. Interacts (GTP-bound) with HOPS complex components VPS39 and VPS41. The cofactor is Mg(2+).

It localises to the cell membrane. It is found in the cytoplasmic vesicle membrane. Its subcellular location is the golgi apparatus. The protein localises to the cytoplasmic vesicle. The protein resides in the autophagosome membrane. It localises to the autolysosome membrane. It catalyses the reaction GTP + H2O = GDP + phosphate + H(+). Its activity is regulated as follows. Regulated by guanine nucleotide exchange factors (GEFs) including C9orf72-SMCR8 complex, which promote the exchange of bound GDP for free GTP. Regulated by GTPase activating proteins (GAPs) which increase the GTP hydrolysis activity. Inhibited by GDP dissociation inhibitors (GDIs). The small GTPases Rab are key regulators of intracellular membrane trafficking, from the formation of transport vesicles to their fusion with membranes. Rabs cycle between an inactive GDP-bound form and an active GTP-bound form that is able to recruit to membranes different sets of downstream effectors directly responsible for vesicle formation, movement, tethering and fusion. RAB39B is involved in autophagy and may function in autophagosome formation. Binds downstream effector PICK1 to ensure selectively GRIA2 exit from the endoplasmic reticulum to the Golgi and to regulate AMPAR composition at the post-synapses and thus synaptic transmission. May regulate the homeostasis of SNCA/alpha-synuclein. The sequence is that of Ras-related protein Rab-39B (RAB39B) from Bos taurus (Bovine).